The following is a 321-amino-acid chain: Histidine N-alpha-methyltransferase (321 aa).

An L-histidine-binding site is contributed by tyrosine 56. S-adenosyl-L-methionine contacts are provided by residues glycine 86, lysine 92, aspartate 113, and 141–142 (DF). L-histidine is bound by residues asparagine 166, tyrosine 206, and 282 to 284 (EVS).

Belongs to the methyltransferase superfamily. EgtD family. Monomer.

The catalysed reaction is L-histidine + 3 S-adenosyl-L-methionine = hercynine + 3 S-adenosyl-L-homocysteine + 3 H(+). Its pathway is amino-acid biosynthesis; ergothioneine biosynthesis. Its function is as follows. Catalyzes the SAM-dependent triple methylation of the alpha-amino group of histidine to form hercynine, a step in the biosynthesis pathway of ergothioneine. Among all the proteinogenic amino acids, only L-histidine is a substrate. In Mycolicibacterium smegmatis (strain ATCC 700084 / mc(2)155) (Mycobacterium smegmatis), this protein is Histidine N-alpha-methyltransferase.